A 276-amino-acid polypeptide reads, in one-letter code: Large ribosomal subunit protein uL2 (276 aa).

2 disordered regions span residues Q37–K59 and V225–R276. Residues Q39–I49 are compositionally biased toward polar residues. The span at T50–K59 shows a compositional bias: basic residues.

The protein belongs to the universal ribosomal protein uL2 family. Part of the 50S ribosomal subunit. Forms a bridge to the 30S subunit in the 70S ribosome.

Its function is as follows. One of the primary rRNA binding proteins. Required for association of the 30S and 50S subunits to form the 70S ribosome, for tRNA binding and peptide bond formation. It has been suggested to have peptidyltransferase activity; this is somewhat controversial. Makes several contacts with the 16S rRNA in the 70S ribosome. This chain is Large ribosomal subunit protein uL2, found in Ralstonia pickettii (strain 12J).